Here is a 440-residue protein sequence, read N- to C-terminus: Xylose isomerase (440 aa).

Residues H101 and D104 contribute to the active site. Mg(2+) is bound by residues E232, E268, H271, D296, D307, D309, and D339.

It belongs to the xylose isomerase family. In terms of assembly, homotetramer. Mg(2+) is required as a cofactor.

Its subcellular location is the cytoplasm. It carries out the reaction alpha-D-xylose = alpha-D-xylulofuranose. This is Xylose isomerase from Escherichia coli O157:H7.